A 601-amino-acid polypeptide reads, in one-letter code: Elongation factor 4 (601 aa).

A tr-type G domain is found at 6–188 (NYIRNFSIVA…AIVRQLPPPH (183 aa)). GTP-binding positions include 18-23 (DHGKST) and 135-138 (NKVD).

This sequence belongs to the TRAFAC class translation factor GTPase superfamily. Classic translation factor GTPase family. LepA subfamily.

It localises to the cell inner membrane. It carries out the reaction GTP + H2O = GDP + phosphate + H(+). In terms of biological role, required for accurate and efficient protein synthesis under certain stress conditions. May act as a fidelity factor of the translation reaction, by catalyzing a one-codon backward translocation of tRNAs on improperly translocated ribosomes. Back-translocation proceeds from a post-translocation (POST) complex to a pre-translocation (PRE) complex, thus giving elongation factor G a second chance to translocate the tRNAs correctly. Binds to ribosomes in a GTP-dependent manner. The protein is Elongation factor 4 of Bartonella quintana (strain Toulouse) (Rochalimaea quintana).